The chain runs to 279 residues: Oxygen-dependent coproporphyrinogen-III oxidase (279 aa).

Position 102 (Ser-102) interacts with substrate. A divalent metal cation-binding residues include His-106 and His-116. The active-site Proton donor is His-116. 118–120 (NTR) lines the substrate pocket. A divalent metal cation-binding residues include His-149 and His-179. Positions 244-279 (YVEFNLLYDRGTKFGLMTDGNVEAILMSLPPEVKFN) are important for dimerization.

Belongs to the aerobic coproporphyrinogen-III oxidase family. Homodimer. Requires a divalent metal cation as cofactor.

It is found in the cytoplasm. The catalysed reaction is coproporphyrinogen III + O2 + 2 H(+) = protoporphyrinogen IX + 2 CO2 + 2 H2O. It functions in the pathway porphyrin-containing compound metabolism; protoporphyrin-IX biosynthesis; protoporphyrinogen-IX from coproporphyrinogen-III (O2 route): step 1/1. Functionally, involved in the heme biosynthesis. Catalyzes the aerobic oxidative decarboxylation of propionate groups of rings A and B of coproporphyrinogen-III to yield the vinyl groups in protoporphyrinogen-IX. In Rickettsia peacockii (strain Rustic), this protein is Oxygen-dependent coproporphyrinogen-III oxidase.